A 245-amino-acid polypeptide reads, in one-letter code: Purine nucleoside phosphorylase (245 aa).

H8 provides a ligand contact to a purine D-ribonucleoside. Phosphate is bound by residues 24–28 (GDPGR), R46, and 89–92 (RAGS). Residue 184-185 (ME) coordinates a purine D-ribonucleoside. The active-site Proton donor is D207.

This sequence belongs to the PNP/MTAP phosphorylase family. Homohexamer; trimer of homodimers.

The catalysed reaction is inosine + phosphate = alpha-D-ribose 1-phosphate + hypoxanthine. It catalyses the reaction guanosine + phosphate = alpha-D-ribose 1-phosphate + guanine. The enzyme catalyses 2'-deoxyguanosine + phosphate = 2-deoxy-alpha-D-ribose 1-phosphate + guanine. It carries out the reaction 2'-deoxyinosine + phosphate = 2-deoxy-alpha-D-ribose 1-phosphate + hypoxanthine. It participates in purine metabolism; purine nucleoside salvage. In terms of biological role, as part of the purine salvage pathway, catalyzes the phosphorolytic breakdown of the N-glycosidic bond in the beta-(deoxy)ribonucleoside molecules, with the formation of the corresponding free purine bases and pentose-1-phosphate. Preferentially acts on inosine and guanosine, and to a lesser extent on 2'-deoxyinosine and 2'-deoxyguanosine. This Plasmodium vivax (strain Salvador I) protein is Purine nucleoside phosphorylase.